Consider the following 116-residue polypeptide: Putative membrane protein (116 aa).

A helical transmembrane segment spans residues 13–33 (VISIITFILVIAIFVIEIVSC).

The protein resides in the host membrane. This Alethinophid 1 reptarenavirus (isolate AlRrV1/Boa/USA/BC/2009) (Golden Gate virus) protein is Putative membrane protein.